Here is a 379-residue protein sequence, read N- to C-terminus: MHCLGLMSGTSADGVDAVLARFDGPPQRPQWSLLRHHHQSYPLELQRQVVAAGQGAPMPAALWLELAEAITEAQAEAALACDPDAKAELIGCHGQTVWHRPPADEARGASWQMLLAPLLAHRLQRPVVHDFRAADLALGGQGAPLVPRADAALLGSTQGWRALLNLGGIANLTLIPPCSGNDRHAAVLGWDCGPANSLIDLGMRQFTNGAQSFDQGGAMAAQGHADELWIQRWLEEEYFQLAPPKSTGRECFGQADLNRRLKQLGGASAADAIATLTAFSAAVVAQDLEHLRQSVGIAPIELITAGGGSQNPVLIDELRRRCRGAQLDASSSLGVPTEAREALVFALLAWWQERGHPGNVPAVTGASREAVLGVRVNPA.

9–16 (GTSADGVD) serves as a coordination point for ATP.

It belongs to the anhydro-N-acetylmuramic acid kinase family.

The enzyme catalyses 1,6-anhydro-N-acetyl-beta-muramate + ATP + H2O = N-acetyl-D-muramate 6-phosphate + ADP + H(+). It participates in amino-sugar metabolism; 1,6-anhydro-N-acetylmuramate degradation. Its pathway is cell wall biogenesis; peptidoglycan recycling. Its function is as follows. Catalyzes the specific phosphorylation of 1,6-anhydro-N-acetylmuramic acid (anhMurNAc) with the simultaneous cleavage of the 1,6-anhydro ring, generating MurNAc-6-P. Is required for the utilization of anhMurNAc either imported from the medium or derived from its own cell wall murein, and thus plays a role in cell wall recycling. The chain is Anhydro-N-acetylmuramic acid kinase from Synechococcus sp. (strain CC9605).